The primary structure comprises 403 residues: D-galactonate dehydratase family member RspA (403 aa).

Substrate is bound by residues Asn37 and His122. Tyr159 serves as the catalytic Proton donor/acceptor. Mg(2+) is bound at residue Asp211. The active-site Proton donor/acceptor is His213. Positions 237 and 263 each coordinate Mg(2+). Glu263, Arg284, His313, Asp317, and Glu340 together coordinate substrate.

The protein belongs to the mandelate racemase/muconate lactonizing enzyme family. GalD subfamily. It depends on Mg(2+) as a cofactor.

The enzyme catalyses D-mannonate = 2-dehydro-3-deoxy-D-gluconate + H2O. The catalysed reaction is D-gluconate = 2-dehydro-3-deoxy-D-gluconate + H2O. Its function is as follows. Has low dehydratase activity with D-mannonate and D-gluconate, suggesting that these are not physiological substrates and that it has no significant role in the in vivo degradation of these compounds. Has no detectable activity with a panel of 70 other acid sugars (in vitro). This is D-galactonate dehydratase family member RspA (rspA) from Halomonas elongata (strain ATCC 33173 / DSM 2581 / NBRC 15536 / NCIMB 2198 / 1H9).